The following is a 185-amino-acid chain: Ribonuclease M5 (185 aa).

One can recognise a Toprim domain in the interval 3 to 84; sequence KEVIVVEGRD…KHARISQSEG (82 aa). Mg(2+) is bound by residues glutamate 9, aspartate 55, and aspartate 57.

The protein belongs to the ribonuclease M5 family. Requires Mg(2+) as cofactor.

It is found in the cytoplasm. The catalysed reaction is Endonucleolytic cleavage of RNA, removing 21 and 42 nucleotides, respectively, from the 5'- and 3'-termini of a 5S-rRNA precursor.. In terms of biological role, required for correct processing of both the 5' and 3' ends of 5S rRNA precursor. Cleaves both sides of a double-stranded region yielding mature 5S rRNA in one step. The chain is Ribonuclease M5 from Clostridium acetobutylicum (strain ATCC 824 / DSM 792 / JCM 1419 / IAM 19013 / LMG 5710 / NBRC 13948 / NRRL B-527 / VKM B-1787 / 2291 / W).